A 364-amino-acid chain; its full sequence is N-acetyl-gamma-glutamyl-phosphate reductase (364 aa).

Cys157 is a catalytic residue.

This sequence belongs to the NAGSA dehydrogenase family. Type 1 subfamily.

The protein resides in the cytoplasm. The catalysed reaction is N-acetyl-L-glutamate 5-semialdehyde + phosphate + NADP(+) = N-acetyl-L-glutamyl 5-phosphate + NADPH + H(+). The protein operates within amino-acid biosynthesis; L-arginine biosynthesis; N(2)-acetyl-L-ornithine from L-glutamate: step 3/4. Functionally, catalyzes the NADPH-dependent reduction of N-acetyl-5-glutamyl phosphate to yield N-acetyl-L-glutamate 5-semialdehyde. This is N-acetyl-gamma-glutamyl-phosphate reductase from Bifidobacterium longum (strain DJO10A).